We begin with the raw amino-acid sequence, 263 residues long: Ribosomal RNA large subunit methyltransferase E (263 aa).

Residues glycine 50, tryptophan 52, aspartate 68, asparagine 84, and aspartate 109 each coordinate S-adenosyl-L-methionine. Lysine 149 (proton acceptor) is an active-site residue. Positions 196 to 254 (PLRKGDKFVVDIEKLGSSGDGAVLIEGFVVFVKEVEVGEKVRIKITDVKPNFAFADVAE) constitute a TRAM domain.

It belongs to the class I-like SAM-binding methyltransferase superfamily. RNA methyltransferase RlmE family.

It is found in the cytoplasm. The enzyme catalyses uridine(2552) in 23S rRNA + S-adenosyl-L-methionine = 2'-O-methyluridine(2552) in 23S rRNA + S-adenosyl-L-homocysteine + H(+). In terms of biological role, specifically methylates the uridine in position 2552 of 23S rRNA at the 2'-O position of the ribose in the fully assembled 50S ribosomal subunit. The chain is Ribosomal RNA large subunit methyltransferase E from Methanosarcina barkeri (strain Fusaro / DSM 804).